Here is a 963-residue protein sequence, read N- to C-terminus: Isoleucine--tRNA ligase (963 aa).

The 'HIGH' region motif lies at 66 to 76 (PYANGDIHIGH). E596 is an L-isoleucyl-5'-AMP binding site. A 'KMSKS' region motif is present at residues 637-641 (KMSKS). Residue K640 participates in ATP binding. Zn(2+)-binding residues include C926, C929, C946, and C949.

The protein belongs to the class-I aminoacyl-tRNA synthetase family. IleS type 1 subfamily. Monomer. It depends on Zn(2+) as a cofactor.

The protein localises to the cytoplasm. The catalysed reaction is tRNA(Ile) + L-isoleucine + ATP = L-isoleucyl-tRNA(Ile) + AMP + diphosphate. Functionally, catalyzes the attachment of isoleucine to tRNA(Ile). As IleRS can inadvertently accommodate and process structurally similar amino acids such as valine, to avoid such errors it has two additional distinct tRNA(Ile)-dependent editing activities. One activity is designated as 'pretransfer' editing and involves the hydrolysis of activated Val-AMP. The other activity is designated 'posttransfer' editing and involves deacylation of mischarged Val-tRNA(Ile). This chain is Isoleucine--tRNA ligase, found in Cupriavidus pinatubonensis (strain JMP 134 / LMG 1197) (Cupriavidus necator (strain JMP 134)).